The chain runs to 126 residues: Ribosome-binding factor A (126 aa).

This sequence belongs to the RbfA family. In terms of assembly, monomer. Binds 30S ribosomal subunits, but not 50S ribosomal subunits or 70S ribosomes.

It is found in the cytoplasm. Functionally, one of several proteins that assist in the late maturation steps of the functional core of the 30S ribosomal subunit. Associates with free 30S ribosomal subunits (but not with 30S subunits that are part of 70S ribosomes or polysomes). Required for efficient processing of 16S rRNA. May interact with the 5'-terminal helix region of 16S rRNA. The sequence is that of Ribosome-binding factor A from Thermosipho africanus (strain TCF52B).